An 89-amino-acid chain; its full sequence is Cell division protein FtsB (89 aa).

The Cytoplasmic portion of the chain corresponds to 1-3 (MRP). Residues 4 to 21 (IIAILIALFILLQYQLWF) form a helical membrane-spanning segment. Topologically, residues 22 to 89 (AAGGIVSVHH…KNEVFYQIVK (68 aa)) are periplasmic. The stretch at 29–62 (VHHLNENINHQIMENQKLKDRNTALLADIDDLKH) forms a coiled coil.

Belongs to the FtsB family. As to quaternary structure, part of a complex composed of FtsB, FtsL and FtsQ.

It localises to the cell inner membrane. In terms of biological role, essential cell division protein. May link together the upstream cell division proteins, which are predominantly cytoplasmic, with the downstream cell division proteins, which are predominantly periplasmic. The chain is Cell division protein FtsB from Coxiella burnetii (strain RSA 493 / Nine Mile phase I).